The primary structure comprises 303 residues: Ribosomal protein L11 methyltransferase (303 aa).

Threonine 152, glycine 173, aspartate 195, and asparagine 239 together coordinate S-adenosyl-L-methionine.

It belongs to the methyltransferase superfamily. PrmA family.

The protein resides in the cytoplasm. The catalysed reaction is L-lysyl-[protein] + 3 S-adenosyl-L-methionine = N(6),N(6),N(6)-trimethyl-L-lysyl-[protein] + 3 S-adenosyl-L-homocysteine + 3 H(+). Methylates ribosomal protein L11. This chain is Ribosomal protein L11 methyltransferase, found in Desulforapulum autotrophicum (strain ATCC 43914 / DSM 3382 / VKM B-1955 / HRM2) (Desulfobacterium autotrophicum).